Here is a 323-residue protein sequence, read N- to C-terminus: Beta-ketoacyl-[acyl-carrier-protein] synthase III (323 aa).

Residues C113 and H250 contribute to the active site. Residues 251–255 form an ACP-binding region; it reads QANKR. The active site involves N280.

It belongs to the thiolase-like superfamily. FabH family. Homodimer.

Its subcellular location is the cytoplasm. It catalyses the reaction malonyl-[ACP] + acetyl-CoA + H(+) = 3-oxobutanoyl-[ACP] + CO2 + CoA. The protein operates within lipid metabolism; fatty acid biosynthesis. Catalyzes the condensation reaction of fatty acid synthesis by the addition to an acyl acceptor of two carbons from malonyl-ACP. Catalyzes the first condensation reaction which initiates fatty acid synthesis and may therefore play a role in governing the total rate of fatty acid production. Possesses both acetoacetyl-ACP synthase and acetyl transacylase activities. Its substrate specificity determines the biosynthesis of branched-chain and/or straight-chain of fatty acids. The polypeptide is Beta-ketoacyl-[acyl-carrier-protein] synthase III (Brucella suis (strain ATCC 23445 / NCTC 10510)).